Consider the following 252-residue polypeptide: Bridging integrator 3 homolog (252 aa).

Residues Gly8–Glu231 enclose the BAR domain. Coiled coils occupy residues Lys17–Ser57, Ser119–Thr150, and Glu224–Arg244.

Its subcellular location is the cytoplasm. It is found in the cytoskeleton. Functionally, involved in cytokinesis and septation where it has a role in the localization of F-actin. In Xenopus laevis (African clawed frog), this protein is Bridging integrator 3 homolog (bin3).